The chain runs to 201 residues: Small ribosomal subunit protein uS4 (201 aa).

The region spanning 92 to 155 (RRLDAVVYAL…QKLDIIQESV (64 aa)) is the S4 RNA-binding domain.

It belongs to the universal ribosomal protein uS4 family. In terms of assembly, part of the 30S ribosomal subunit. Contacts protein S5. The interaction surface between S4 and S5 is involved in control of translational fidelity.

Functionally, one of the primary rRNA binding proteins, it binds directly to 16S rRNA where it nucleates assembly of the body of the 30S subunit. With S5 and S12 plays an important role in translational accuracy. This Staphylococcus carnosus (strain TM300) protein is Small ribosomal subunit protein uS4.